Consider the following 363-residue polypeptide: Carbamoyl phosphate synthase small chain (363 aa).

The CPSase stretch occupies residues 1 to 171 (MEDGTLFAGA…PYRIPGPGPR (171 aa)). L-glutamine is bound by residues Ser-39, Gly-219, and Gly-221. Positions 171-359 (RVVAVDFGAK…LALVDRSAVS (189 aa)) constitute a Glutamine amidotransferase type-1 domain. Cys-248 acts as the Nucleophile in catalysis. Residues Leu-249, Gln-252, Asn-290, Gly-292, and Tyr-293 each coordinate L-glutamine. Residues His-332 and Glu-334 contribute to the active site.

The protein belongs to the CarA family. As to quaternary structure, composed of two chains; the small (or glutamine) chain promotes the hydrolysis of glutamine to ammonia, which is used by the large (or ammonia) chain to synthesize carbamoyl phosphate. Tetramer of heterodimers (alpha,beta)4.

The catalysed reaction is hydrogencarbonate + L-glutamine + 2 ATP + H2O = carbamoyl phosphate + L-glutamate + 2 ADP + phosphate + 2 H(+). The enzyme catalyses L-glutamine + H2O = L-glutamate + NH4(+). Its pathway is amino-acid biosynthesis; L-arginine biosynthesis; carbamoyl phosphate from bicarbonate: step 1/1. The protein operates within pyrimidine metabolism; UMP biosynthesis via de novo pathway; (S)-dihydroorotate from bicarbonate: step 1/3. Functionally, small subunit of the glutamine-dependent carbamoyl phosphate synthetase (CPSase). CPSase catalyzes the formation of carbamoyl phosphate from the ammonia moiety of glutamine, carbonate, and phosphate donated by ATP, constituting the first step of 2 biosynthetic pathways, one leading to arginine and/or urea and the other to pyrimidine nucleotides. The small subunit (glutamine amidotransferase) binds and cleaves glutamine to supply the large subunit with the substrate ammonia. This Symbiobacterium thermophilum (strain DSM 24528 / JCM 14929 / IAM 14863 / T) protein is Carbamoyl phosphate synthase small chain.